Consider the following 190-residue polypeptide: Large ribosomal subunit protein bL25 (190 aa).

It belongs to the bacterial ribosomal protein bL25 family. CTC subfamily. Part of the 50S ribosomal subunit; part of the 5S rRNA/L5/L18/L25 subcomplex. Contacts the 5S rRNA. Binds to the 5S rRNA independently of L5 and L18.

Its function is as follows. This is one of the proteins that binds to the 5S RNA in the ribosome where it forms part of the central protuberance. This is Large ribosomal subunit protein bL25 from Neisseria meningitidis serogroup A / serotype 4A (strain DSM 15465 / Z2491).